The sequence spans 347 residues: Fatty acid elongase 2 (347 aa).

The Lumenal segment spans residues 1-62 (MNSLVTQYAA…PSEFQFIAGE (62 aa)). The N-linked (GlcNAc...) asparagine glycan is linked to Asn-32. Residues 63 to 83 (LPLSTLPPVLYAITAYYVIIF) form a helical membrane-spanning segment. Residues 84–96 (GGRFLLSKSKPFK) are Cytoplasmic-facing. Residues 97–119 (LNGLFQLHNLVLTSLSLTLLLLM) traverse the membrane as a helical segment. The Lumenal portion of the chain corresponds to 120-122 (VEQ). A helical transmembrane segment spans residues 123-142 (LVPIIVQHGLYFAICNIGAW). At 143 to 146 (TQPL) the chain is on the cytoplasmic side. A helical transmembrane segment spans residues 147 to 169 (VTLYYMNYIVKFIEFIDTFFLVL). Over 170–200 (KHKKLTFLHTYHHGATALLCYTQLMGTTSIS) the chain is Lumenal. The HxxHH motif signature appears at 178-182 (HTYHH). Residues 201–221 (WVPISLNLGVHVVMYWYYFLA) form a helical membrane-spanning segment. Over 222–231 (ARGIRVWWKE) the chain is Cytoplasmic. The helical transmembrane segment at 232 to 254 (WVTRFQIIQFVLDIGFIYFAVYQ) threads the bilayer. At 255 to 275 (KAVHLYFPILPHCGDCVGSTT) the chain is on the lumenal side. Residues 276-296 (ATFAGCAIISSYLVLFISFYI) form a helical membrane-spanning segment. Topologically, residues 297-347 (NVYKRKGTKTSRVVKRAHGGVAAKVNEYVNVDLKNVPTPSPSPKPQHRRKR) are cytoplasmic. Residue Thr-334 is modified to Phosphothreonine. A phosphoserine mark is found at Ser-336 and Ser-338. The short motif at 344-347 (RRKR) is the Di-lysine-like motif element.

Belongs to the ELO family.

It localises to the endoplasmic reticulum membrane. The catalysed reaction is a very-long-chain acyl-CoA + malonyl-CoA + H(+) = a very-long-chain 3-oxoacyl-CoA + CO2 + CoA. The enzyme catalyses octadecanoyl-CoA + malonyl-CoA + H(+) = 3-oxoeicosanoyl-CoA + CO2 + CoA. It carries out the reaction hexadecanoyl-CoA + malonyl-CoA + H(+) = 3-oxooctadecanoyl-CoA + CO2 + CoA. It catalyses the reaction eicosanoyl-CoA + malonyl-CoA + H(+) = 3-oxodocosanoyl-CoA + CO2 + CoA. The catalysed reaction is docosanoyl-CoA + malonyl-CoA + H(+) = 3-oxotetracosanoyl-CoA + CO2 + CoA. Component of a microsomal membrane-bound long-chain fatty acid elongation system, which produces the 20-26-carbon very long-chain fatty acids (VLCFA) from long-chain fatty acid precursors and is involved ceramide and inositol sphingolipid biosynthesis. Component of elongase II, which elongates 16-18 carbon fatty acyl-CoAs such as palmitoyl-CoA and stearoyl-CoA to 20-22-carbon fatty acids by incorporation of malonyl-CoA. Involved in the synthesis of 1,3-beta-glucan. The enzymes active site faces the cytosol, whereas VLCFA length is determined by a lysine near the luminal end of transmembrane helix 6. Plays an important role in lipotoxic cell death induced by oleic acid through maintaining a balanced fatty acid composition in thr plasma membrane. The protein is Fatty acid elongase 2 of Saccharomyces cerevisiae (strain ATCC 204508 / S288c) (Baker's yeast).